A 181-amino-acid chain; its full sequence is Large ribosomal subunit protein uL5c (181 aa).

It belongs to the universal ribosomal protein uL5 family. As to quaternary structure, part of the 50S ribosomal subunit; contacts the 5S rRNA.

The protein resides in the plastid. In terms of biological role, binds 5S rRNA, forms part of the central protuberance of the 50S subunit. The protein is Large ribosomal subunit protein uL5c (rpl5) of Helicosporidium sp. subsp. Simulium jonesii (Green alga).